Here is a 241-residue protein sequence, read N- to C-terminus: tRNA pseudouridine synthase A (241 aa).

The active-site Nucleophile is the Asp-51. Residue Tyr-110 coordinates substrate.

Belongs to the tRNA pseudouridine synthase TruA family. In terms of assembly, homodimer.

It carries out the reaction uridine(38/39/40) in tRNA = pseudouridine(38/39/40) in tRNA. Formation of pseudouridine at positions 38, 39 and 40 in the anticodon stem and loop of transfer RNAs. The sequence is that of tRNA pseudouridine synthase A from Campylobacter jejuni subsp. jejuni serotype O:23/36 (strain 81-176).